The primary structure comprises 251 residues: CDP-diacylglycerol pyrophosphatase (251 aa).

A helical transmembrane segment spans residues 4-24; sequence AGLLFLVMIVIAVVAAGIGYW.

The protein belongs to the Cdh family.

It is found in the cell inner membrane. The catalysed reaction is a CDP-1,2-diacyl-sn-glycerol + H2O = a 1,2-diacyl-sn-glycero-3-phosphate + CMP + 2 H(+). Its pathway is phospholipid metabolism; CDP-diacylglycerol degradation; phosphatidate from CDP-diacylglycerol: step 1/1. The polypeptide is CDP-diacylglycerol pyrophosphatase (Escherichia coli O127:H6 (strain E2348/69 / EPEC)).